The primary structure comprises 354 residues: Ion-translocating oxidoreductase complex subunit D (354 aa).

3 consecutive transmembrane segments (helical) span residues 9-28, 67-87, and 117-137; these read IMLHVCLALLPTTAWGLYLF, LLSGWLLALTLPPWAPWWIAV, and VALLIAFPLQMTTWALPLPLG. T165 is subject to FMN phosphoryl threonine. 5 helical membrane-spanning segments follow: residues 200–220, 222–242, 249–269, 277–297, and 301–321; these read GSLGETSELLILLGGLWLLAL, IIHWEIPLGMLLTVGALAALA, VHGGGLFHLTSGGLLLGALFI, PISRSGRLIFAIGCGALVFVI, and GNFPEAVAFAVLLMNALVPLI.

The protein belongs to the NqrB/RnfD family. As to quaternary structure, the complex is composed of six subunits: RnfA, RnfB, RnfC, RnfD, RnfE and RnfG. FMN serves as cofactor.

The protein localises to the cell inner membrane. Part of a membrane-bound complex that couples electron transfer with translocation of ions across the membrane. The sequence is that of Ion-translocating oxidoreductase complex subunit D from Stutzerimonas stutzeri (Pseudomonas stutzeri).